Consider the following 181-residue polypeptide: Oligoribonuclease (181 aa).

One can recognise an Exonuclease domain in the interval 8 to 171 (LVWIDMEMTG…DDIRESIAEL (164 aa)). Y129 is a catalytic residue.

This sequence belongs to the oligoribonuclease family.

Its subcellular location is the cytoplasm. Functionally, 3'-to-5' exoribonuclease specific for small oligoribonucleotides. This is Oligoribonuclease from Pseudoalteromonas atlantica (strain T6c / ATCC BAA-1087).